The sequence spans 282 residues: MHIRIGTRSSKLAMIQAMMVKDRLDSLGIETEVKGFTSKGDINLDSPLYSIGGTGVFVDDLNRMILKNEIDIAVHSAKDIPSFIDDSLEISAVLKRDDPRDVLISQHSLNDLEASSVIGTSSLRRIKELKTLRNDILIKDLRGNIDTRLKKLDNGDYDGIIMAKAAYDRMRINRRHFILNYDDFVPAPNQGIIAIISKKDSEINDVLKKINDDETYNDMKAERLILSGLNLGCSKPVGIYAHKNRIFMRFYSLKNDDYKDIVMDYNNIDLEFIRSEIHDYGY.

Residue Cys233 is modified to S-(dipyrrolylmethanemethyl)cysteine.

The protein belongs to the HMBS family. Dipyrromethane is required as a cofactor.

It catalyses the reaction 4 porphobilinogen + H2O = hydroxymethylbilane + 4 NH4(+). Its pathway is porphyrin-containing compound metabolism; protoporphyrin-IX biosynthesis; coproporphyrinogen-III from 5-aminolevulinate: step 2/4. Functionally, tetrapolymerization of the monopyrrole PBG into the hydroxymethylbilane pre-uroporphyrinogen in several discrete steps. This chain is Probable porphobilinogen deaminase, found in Picrophilus torridus (strain ATCC 700027 / DSM 9790 / JCM 10055 / NBRC 100828 / KAW 2/3).